The primary structure comprises 333 residues: DNA-directed RNA polymerase subunit alpha (333 aa).

The alpha N-terminal domain (alpha-NTD) stretch occupies residues 1-234; that stretch reads MQSSVNEFLT…QQLAAFVDLK (234 aa). An alpha C-terminal domain (alpha-CTD) region spans residues 248 to 333; it reads IDPILLRPVD…SLKKDDKATA (86 aa).

This sequence belongs to the RNA polymerase alpha chain family. As to quaternary structure, homodimer. The RNAP catalytic core consists of 2 alpha, 1 beta, 1 beta' and 1 omega subunit. When a sigma factor is associated with the core the holoenzyme is formed, which can initiate transcription.

It carries out the reaction RNA(n) + a ribonucleoside 5'-triphosphate = RNA(n+1) + diphosphate. In terms of biological role, DNA-dependent RNA polymerase catalyzes the transcription of DNA into RNA using the four ribonucleoside triphosphates as substrates. This Pseudomonas aeruginosa (strain UCBPP-PA14) protein is DNA-directed RNA polymerase subunit alpha.